Reading from the N-terminus, the 451-residue chain is uncharacterized protein (451 aa).

Positions 1–59 (MLKKNDIVEVEISDLSHDGAGIAKVDGLVFFVDNALPTEKIRMRVLKVKKNIAFGKVES) constitute a TRAM domain. S-adenosyl-L-methionine is bound by residues Gln283, Tyr312, Glu333, and Asp381. Cys408 functions as the Nucleophile in the catalytic mechanism.

Belongs to the class I-like SAM-binding methyltransferase superfamily. RNA M5U methyltransferase family.

This is an uncharacterized protein from Streptococcus mutans serotype c (strain ATCC 700610 / UA159).